The primary structure comprises 375 residues: Chaperone protein DnaJ (375 aa).

One can recognise a J domain in the interval D5–G70. The CR-type zinc finger occupies G134–Y212. Zn(2+) contacts are provided by C147, C150, C164, C167, C186, C189, C200, and C203. CXXCXGXG motif repeat units follow at residues C147–G154, C164–G171, C186–G193, and C200–G207.

It belongs to the DnaJ family. As to quaternary structure, homodimer. Requires Zn(2+) as cofactor.

The protein localises to the cytoplasm. Functionally, participates actively in the response to hyperosmotic and heat shock by preventing the aggregation of stress-denatured proteins and by disaggregating proteins, also in an autonomous, DnaK-independent fashion. Unfolded proteins bind initially to DnaJ; upon interaction with the DnaJ-bound protein, DnaK hydrolyzes its bound ATP, resulting in the formation of a stable complex. GrpE releases ADP from DnaK; ATP binding to DnaK triggers the release of the substrate protein, thus completing the reaction cycle. Several rounds of ATP-dependent interactions between DnaJ, DnaK and GrpE are required for fully efficient folding. Also involved, together with DnaK and GrpE, in the DNA replication of plasmids through activation of initiation proteins. This Pseudomonas putida (strain ATCC 47054 / DSM 6125 / CFBP 8728 / NCIMB 11950 / KT2440) protein is Chaperone protein DnaJ.